A 224-amino-acid polypeptide reads, in one-letter code: Flagellar L-ring protein (224 aa).

The signal sequence occupies residues 1 to 15 (MARYLVLAVALLLAA). Cysteine 16 carries the N-palmitoyl cysteine lipid modification. Cysteine 16 carries the S-diacylglycerol cysteine lipid modification.

The protein belongs to the FlgH family. The basal body constitutes a major portion of the flagellar organelle and consists of four rings (L,P,S, and M) mounted on a central rod.

It is found in the cell outer membrane. The protein resides in the bacterial flagellum basal body. Assembles around the rod to form the L-ring and probably protects the motor/basal body from shearing forces during rotation. The chain is Flagellar L-ring protein from Shewanella baltica (strain OS185).